Consider the following 428-residue polypeptide: Type II methyltransferase M.BanI (428 aa).

Positions 3 to 417 constitute an SAM-dependent MTase C5-type domain; the sequence is IKFVDLFAGI…EDLFQNNVNE (415 aa). The active site involves Cys76.

This sequence belongs to the class I-like SAM-binding methyltransferase superfamily. C5-methyltransferase family. In terms of assembly, monomer.

It carries out the reaction a 2'-deoxycytidine in DNA + S-adenosyl-L-methionine = a 5-methyl-2'-deoxycytidine in DNA + S-adenosyl-L-homocysteine + H(+). A methylase, recognizes the double-stranded sequence 5'-GGYRCC-3', methylates C-4 on both strands, and protects the DNA from cleavage by the BanI endonuclease. In Aneurinibacillus aneurinilyticus (Bacillus aneurinolyticus), this protein is Type II methyltransferase M.BanI (banIM).